A 163-amino-acid polypeptide reads, in one-letter code: T-cell surface glycoprotein CD3 zeta chain (163 aa).

A signal peptide spans 1 to 21 (MKWKALFTAAILQAQLPITEA). The Extracellular segment spans residues 22–30 (QSFGLLDPK). The chain crosses the membrane as a helical span at residues 31–51 (LCYLLDGILFIYGVILTALFL). Residues 52-163 (RVKFSRSADA…ALHMQALPPR (112 aa)) lie on the Cytoplasmic side of the membrane. The residue at position 58 (serine 58) is a Phosphoserine. 3 ITAM domains span residues 61 to 89 (APAY…LDKR), 99 to 127 (KPRR…EIGM), and 130 to 158 (ERRR…LHMQ). 7 positions are modified to phosphotyrosine: tyrosine 64, tyrosine 72, tyrosine 83, tyrosine 110, tyrosine 122, tyrosine 141, and tyrosine 152. Over residues 83–98 (YDVLDKRRGRDPEMGG) the composition is skewed to basic and acidic residues. A disordered region spans residues 83–111 (YDVLDKRRGRDPEMGGKPRRKNPQEGLYN).

It belongs to the CD3Z/FCER1G family. As to quaternary structure, the TCR-CD3 complex is composed of a CD3D/CD3E and a CD3G/CD3E heterodimers that preferentially associate with TCRalpha and TCRbeta, respectively, to form TCRalpha/CD3E/CD3G and TCRbeta/CD3G/CD3E trimers. In turn, the hexamer interacts with CD3Z homodimer to form the TCR-CD3 complex. Alternatively, TCRalpha and TCRbeta can be replaced by TCRgamma and TCRdelta. Interacts with SLA. Interacts with TRAT1. Interacts with DOCK2. Interacts with SLA2. Interacts with SHB. Interacts with ZAP70. Interacts (tyrosine phosphorylated) with SHC1 (via SH2 domain). Interacts with PTPRC. Interacts with CRK; this interaction regulates CD3Z phosphorylation. Interacts (on T cell side) with CD81, ICAM1 and CD9 at immunological synapses between antigen-presenting cells and T cells. Interacts with CD160. Interacts with LY6E. Interacts with LY6E. The signaling subunit of immunoglobulin gamma (IgG) Fc receptor complex. As a homodimer or a heterodimer with FCER1G, associates with the ligand binding subunit FCGR3A (via transmembrane domain); this interaction is a prerequisite for Fc receptor complex expression on the cell surface. Interacts with CD5. Phosphorylated on Tyr residues after T-cell receptor triggering by LCK in association with CD4/CD8.

The protein localises to the cell membrane. Part of the TCR-CD3 complex present on T-lymphocyte cell surface that plays an essential role in adaptive immune response. When antigen presenting cells (APCs) activate T-cell receptor (TCR), TCR-mediated signals are transmitted across the cell membrane by the CD3 chains CD3D, CD3E, CD3G and CD3Z. All CD3 chains contain immunoreceptor tyrosine-based activation motifs (ITAMs) in their cytoplasmic domain. Upon TCR engagement, these motifs become phosphorylated by Src family protein tyrosine kinases LCK and FYN, resulting in the activation of downstream signaling pathways. CD3Z ITAMs phosphorylation creates multiple docking sites for the protein kinase ZAP70 leading to ZAP70 phosphorylation and its conversion into a catalytically active enzyme. Plays an important role in intrathymic T-cell differentiation. Additionally, participates in the activity-dependent synapse formation of retinal ganglion cells (RGCs) in both the retina and dorsal lateral geniculate nucleus (dLGN). The chain is T-cell surface glycoprotein CD3 zeta chain (CD247) from Sus scrofa (Pig).